The following is a 311-amino-acid chain: Putative dihydroorotate dehydrogenase A (fumarate) (311 aa).

Substrate-binding positions include Lys-45, 69–73, and Asn-128; that span reads NSMGL. 45–46 contacts FMN; that stretch reads KT. Position 128 (Asn-128) interacts with FMN. Cys-131 (nucleophile) is an active-site residue. Residues Lys-165 and Val-193 each contribute to the FMN site. 194–195 contacts substrate; the sequence is NS. FMN-binding positions include Gly-220, 248–249, and 270–271; these read GG and GT.

The protein belongs to the dihydroorotate dehydrogenase family. Type 1 subfamily. In terms of assembly, homodimer. The cofactor is FMN.

The protein resides in the cytoplasm. The catalysed reaction is (S)-dihydroorotate + fumarate = orotate + succinate. Its pathway is pyrimidine metabolism; UMP biosynthesis via de novo pathway. Functionally, catalyzes the conversion of dihydroorotate to orotate with fumarate as the electron acceptor. The chain is Putative dihydroorotate dehydrogenase A (fumarate) (pyrD) from Streptococcus pyogenes serotype M3 (strain SSI-1).